The chain runs to 162 residues: UPF0260 protein Caul_3920 (162 aa).

Belongs to the UPF0260 family.

The protein is UPF0260 protein Caul_3920 of Caulobacter sp. (strain K31).